The following is a 256-amino-acid chain: Pyridoxine 5'-phosphate synthase (256 aa).

Asparagine 10 lines the 3-amino-2-oxopropyl phosphate pocket. 12 to 13 serves as a coordination point for 1-deoxy-D-xylulose 5-phosphate; the sequence is DH. Residue arginine 21 coordinates 3-amino-2-oxopropyl phosphate. Histidine 46 functions as the Proton acceptor in the catalytic mechanism. Residues arginine 48 and histidine 53 each coordinate 1-deoxy-D-xylulose 5-phosphate. Residue glutamate 73 is the Proton acceptor of the active site. Position 103 (threonine 103) interacts with 1-deoxy-D-xylulose 5-phosphate. Histidine 193 functions as the Proton donor in the catalytic mechanism. Residues glycine 194 and 215 to 216 each bind 3-amino-2-oxopropyl phosphate; that span reads GH.

This sequence belongs to the PNP synthase family. In terms of assembly, homooctamer; tetramer of dimers.

It is found in the cytoplasm. The enzyme catalyses 3-amino-2-oxopropyl phosphate + 1-deoxy-D-xylulose 5-phosphate = pyridoxine 5'-phosphate + phosphate + 2 H2O + H(+). It functions in the pathway cofactor biosynthesis; pyridoxine 5'-phosphate biosynthesis; pyridoxine 5'-phosphate from D-erythrose 4-phosphate: step 5/5. Functionally, catalyzes the complicated ring closure reaction between the two acyclic compounds 1-deoxy-D-xylulose-5-phosphate (DXP) and 3-amino-2-oxopropyl phosphate (1-amino-acetone-3-phosphate or AAP) to form pyridoxine 5'-phosphate (PNP) and inorganic phosphate. In Zymomonas mobilis subsp. mobilis (strain ATCC 31821 / ZM4 / CP4), this protein is Pyridoxine 5'-phosphate synthase.